A 505-amino-acid chain; its full sequence is Cytochrome P450 2K6 (505 aa).

A helical membrane pass occupies residues 7–27 (FLLQGSPTGTILGALLLFLVI). Heme is bound at residue C448.

The protein belongs to the cytochrome P450 family. Heme serves as cofactor. In terms of tissue distribution, detected in liver and ovary.

Its subcellular location is the endoplasmic reticulum membrane. It is found in the microsome membrane. In terms of biological role, metabolizes aflatoxin B1 (AFB1) to the cytotoxic derivative AFB1 exo-8,9-epoxide. Does not show activity towards lauric acid. In Danio rerio (Zebrafish), this protein is Cytochrome P450 2K6.